Reading from the N-terminus, the 638-residue chain is MAAREELYSKVTPRRDRLQRPGTVKHGSALDVLLSMGFPRARAQKALASTGGRSVQAACDWLFSHVGDPFLDDPLPREYVLYLRPTGPLAQKLSDFWQQSKQICGKNKAHNIFPHITLCQFFMCEDSKVDALGEALQTTVSRWKCKFSAPLPLELYTSSNFIGLFVKEDSAEVLKKFAADFAAEAASKTEVHVEPHKKQLHVTLAYHFQASHLPTLEKLAQNIDVKLGCDWVATIFSRDIRFANHETLQVIYPYSPQNDDELELVPGDFIFMSPMEQTSTSEGWIYGTSLTTGCSGLLPENYITKADECSTWIFHGSYSILNTVSSSSLAFGDGALERRQYEDQGLGETTPLTIICQPMQPLRVNSQPGPQKRCLFVCRHGERMDVVFGKYWLSQCFDAKGRYIRTNLNMPHSLPQRSGGFRDYEKDAPITVFGCMQARLVGEALLESNTVIDHVYCSPSLRCVQTAHNILKGLQQDNHLKIRVEPGLFEWTKWVAGSTLPAWIPPSELAAANLSVDTTYRPHIPVSKLAISESYDTYINRSFQVTKEIISECKSKGNNILIVAHASSLEACTCQLQGLSPQNSKDFVQMVRKIPYLGFCSCEELGETGIWQLTDPPILPLTHGPTGGFNWRETLLQE.

Residue serine 9 is modified to Phosphoserine. Threonine 12 carries the post-translational modification Phosphothreonine. A UBA domain is found at 23-65 (TVKHGSALDVLLSMGFPRARAQKALASTGGRSVQAACDWLFSH). The SH3 domain maps to 243–308 (ANHETLQVIY…PENYITKADE (66 aa)). Residues 369-638 (GPQKRCLFVC…FNWRETLLQE (270 aa)) are protein tyrosine phosphatase. Arginine 379 is an active-site residue. Catalysis depends on histidine 380, which acts as the Tele-phosphohistidine intermediate. The active site involves histidine 565.

As to quaternary structure, homodimer. Interacts with JAK2 (in vitro). Interacts with CBL. Part of a complex containing CBL and activated EGFR. Interacts with ubiquitin and with mono-ubiquitinated proteins. Interacts with ZAP70 (ubiquitinated form). In terms of tissue distribution, detected in splenic T-cells and B-cells, total spleen, skeletal muscle, heart, lung, kidney, thymus, brain and liver (at protein level). Highly expressed in brain. Detected in heart, spleen, lung, liver, kidney and testis.

Its subcellular location is the cytoplasm. The protein localises to the nucleus. The catalysed reaction is O-phospho-L-tyrosyl-[protein] + H2O = L-tyrosyl-[protein] + phosphate. Interferes with CBL-mediated down-regulation and degradation of receptor-type tyrosine kinases. Promotes accumulation of activated target receptors, such as T-cell receptors and EGFR, on the cell surface. Exhibits tyrosine phosphatase activity toward several substrates including EGFR, FAK, SYK, and ZAP70. Down-regulates proteins that are dually modified by both protein tyrosine phosphorylation and ubiquitination. The sequence is that of Ubiquitin-associated and SH3 domain-containing protein B (Ubash3b) from Mus musculus (Mouse).